Consider the following 551-residue polypeptide: Transcription factor 7-like 1-B (551 aa).

The segment covering 1-11 has biased composition (gly residues); it reads MPQLNSGGGDE. The segment at 1 to 61 is interaction with CTNNB1-A; it reads MPQLNSGGGD…SENHSSDSDS (61 aa). Disordered regions lie at residues 1 to 77, 183 to 213, 391 to 474, and 492 to 515; these read MPQL…EKPR, GTPP…PYYP, WSAR…SLTT, and SPSS…SRPI. 2 stretches are compositionally biased toward basic and acidic residues: residues 17 to 32 and 52 to 77; these read ELIR…EKSP and SENH…EKPR. The segment at 109 to 312 is interaction with AES and TLE4-A; the sequence is LGGHYLPNGA…SPNLSTKSNV (204 aa). Residues 324–392 constitute a DNA-binding region (HMG box); that stretch reads IKKPLNAFML…LHSQLYPSWS (69 aa). A compositionally biased stretch (basic and acidic residues) spans 407–416; the sequence is KQSPEMENYT. The segment at 408–551 is interaction with CTBP-B; sequence QSPEMENYTK…PLSLVTRSSD (144 aa). Over residues 445-464 the composition is skewed to low complexity; sequence SPATPSAALASPAAPAATHS. Residues 465-474 are compositionally biased toward polar residues; it reads EQAQPLSLTT.

The protein belongs to the TCF/LEF family. Interacts with csnk1e, ctnnb1-A, ctbp-B, dact1-A and gsk3b. May interact with ase and tle4-A. Interacts with tle1-B. Phosphorylated. Phosphorylation by csnk1e promotes binding to ctnnb1-A while phosphorylation by gsk3b may reverse this effect.

It localises to the nucleus. Its function is as follows. Participates in the Wnt signaling pathway. Binds to DNA and acts as a repressor in the absence of ctnnb1-A and possibly ctnnb1-B, and as an activator in the presence of these proteins. Required early in development for the establishment of the dorsal body axis in response to maternal Wnt signaling. In Xenopus laevis (African clawed frog), this protein is Transcription factor 7-like 1-B (tcf7l1-b).